We begin with the raw amino-acid sequence, 317 residues long: MEELNTIKLSDHLTPFLTFNRQQWAELRKSVPLKLTEQDLKPLLGFNEELSLEEVSTIYLPLARLINYYIEENLRRQTVLKRFLSGHNPKVPYIISIAGSVSVGKSTSARILQSLLANWPVARKVDLITTDGFLYPLEILQKKNLLQKKGFPISYDTQRLIRFLADIKSGKKNVKAPIYSHLTYDIIPNQFDIVDRPDILILEGLNVLQIGSNKSNQMFVSDFVDFSIFVDAEEDQLKEWYIKRFLKFCRSAFTDPNSYFKHYANLSEQEAIETASQIWDNINGLNLKQNILPTRERANLILKKGENHKVELVKLRK.

99 to 106 (GSVSVGKS) is a binding site for ATP.

This sequence belongs to the prokaryotic pantothenate kinase family.

The protein resides in the cytoplasm. The catalysed reaction is (R)-pantothenate + ATP = (R)-4'-phosphopantothenate + ADP + H(+). It participates in cofactor biosynthesis; coenzyme A biosynthesis; CoA from (R)-pantothenate: step 1/5. The protein is Pantothenate kinase of Histophilus somni (strain 2336) (Haemophilus somnus).